The sequence spans 507 residues: ATP synthase subunit alpha, chloroplastic (507 aa).

170–177 is a binding site for ATP; that stretch reads GDRQTGKT. T257 carries the phosphothreonine modification.

This sequence belongs to the ATPase alpha/beta chains family. In terms of assembly, F-type ATPases have 2 components, CF(1) - the catalytic core - and CF(0) - the membrane proton channel. CF(1) has five subunits: alpha(3), beta(3), gamma(1), delta(1), epsilon(1). CF(0) has four main subunits: a, b, b' and c.

It localises to the plastid. Its subcellular location is the chloroplast thylakoid membrane. The enzyme catalyses ATP + H2O + 4 H(+)(in) = ADP + phosphate + 5 H(+)(out). Its function is as follows. Produces ATP from ADP in the presence of a proton gradient across the membrane. The alpha chain is a regulatory subunit. This Arabis hirsuta (Hairy rock-cress) protein is ATP synthase subunit alpha, chloroplastic.